A 342-amino-acid chain; its full sequence is N-acetyl-gamma-glutamyl-phosphate reductase (342 aa).

Cysteine 149 is an active-site residue.

This sequence belongs to the NAGSA dehydrogenase family. Type 1 subfamily.

The protein resides in the cytoplasm. The enzyme catalyses N-acetyl-L-glutamate 5-semialdehyde + phosphate + NADP(+) = N-acetyl-L-glutamyl 5-phosphate + NADPH + H(+). It participates in amino-acid biosynthesis; L-arginine biosynthesis; N(2)-acetyl-L-ornithine from L-glutamate: step 3/4. In terms of biological role, catalyzes the NADPH-dependent reduction of N-acetyl-5-glutamyl phosphate to yield N-acetyl-L-glutamate 5-semialdehyde. The sequence is that of N-acetyl-gamma-glutamyl-phosphate reductase from Paracoccus denitrificans (strain Pd 1222).